Reading from the N-terminus, the 331-residue chain is 2-isopropylmalate synthase (331 aa).

The Pyruvate carboxyltransferase domain maps to 1 to 80 (RDEVVRGRDV…YTRINTREIY (80 aa)). 3 residues coordinate Mn(2+): His-15, His-17, and Asn-51. The tract at residues 205–331 (QLEHVQFFSG…PSIEEVHRGV (127 aa)) is regulatory domain.

This sequence belongs to the alpha-IPM synthase/homocitrate synthase family. LeuA type 1 subfamily. Homotetramer. It depends on Mn(2+) as a cofactor.

The protein localises to the cytoplasm. It catalyses the reaction 3-methyl-2-oxobutanoate + acetyl-CoA + H2O = (2S)-2-isopropylmalate + CoA + H(+). It participates in amino-acid biosynthesis; L-leucine biosynthesis; L-leucine from 3-methyl-2-oxobutanoate: step 1/4. Functionally, catalyzes the condensation of the acetyl group of acetyl-CoA with 3-methyl-2-oxobutanoate (2-oxoisovalerate) to form 3-carboxy-3-hydroxy-4-methylpentanoate (2-isopropylmalate). The protein is 2-isopropylmalate synthase of Thermus thermophilus.